A 272-amino-acid polypeptide reads, in one-letter code: Phosphatidylglycerol--prolipoprotein diacylglyceryl transferase (272 aa).

4 helical membrane passes run 15-35, 53-73, 94-114, and 117-137; these read LGPL…LVLF, AFAV…WHVV, GLGF…IAKI, and VPPF…LCFA. Residue R138 coordinates a 1,2-diacyl-sn-glycero-3-phospho-(1'-sn-glycerol). 3 helical membrane passes run 174–194, 199–219, and 237–257; these read FHPI…ILLV, VFVK…VLYG, and FGLD…VLIA.

The protein belongs to the Lgt family.

It is found in the cell membrane. The catalysed reaction is L-cysteinyl-[prolipoprotein] + a 1,2-diacyl-sn-glycero-3-phospho-(1'-sn-glycerol) = an S-1,2-diacyl-sn-glyceryl-L-cysteinyl-[prolipoprotein] + sn-glycerol 1-phosphate + H(+). It participates in protein modification; lipoprotein biosynthesis (diacylglyceryl transfer). Catalyzes the transfer of the diacylglyceryl group from phosphatidylglycerol to the sulfhydryl group of the N-terminal cysteine of a prolipoprotein, the first step in the formation of mature lipoproteins. The sequence is that of Phosphatidylglycerol--prolipoprotein diacylglyceryl transferase from Tropheryma whipplei (strain TW08/27) (Whipple's bacillus).